We begin with the raw amino-acid sequence, 173 residues long: Placenta-specific protein 1 (173 aa).

Residues 1-23 (MNLRKFLGGTVLVAFMLFSYSEQ) form the signal peptide.

It belongs to the PLAC1 family. In terms of tissue distribution, expressed in placenta.

Its subcellular location is the secreted. May play a role in placental development. The polypeptide is Placenta-specific protein 1 (Mus musculus (Mouse)).